We begin with the raw amino-acid sequence, 309 residues long: Pseudouridine-5'-phosphate glycosidase 2 (309 aa).

Glu-26 functions as the Proton donor in the catalytic mechanism. Positions 87 and 107 each coordinate substrate. Asp-139 is a binding site for Mn(2+). Residue 141–143 (SAD) participates in substrate binding. Residue Lys-160 is the Nucleophile of the active site.

The protein belongs to the pseudouridine-5'-phosphate glycosidase family. In terms of assembly, homotrimer. Requires Mn(2+) as cofactor.

The enzyme catalyses D-ribose 5-phosphate + uracil = psi-UMP + H2O. Its function is as follows. Catalyzes the reversible cleavage of pseudouridine 5'-phosphate (PsiMP) to ribose 5-phosphate and uracil. Functions biologically in the cleavage direction, as part of a pseudouridine degradation pathway. In Rhizobium johnstonii (strain DSM 114642 / LMG 32736 / 3841) (Rhizobium leguminosarum bv. viciae), this protein is Pseudouridine-5'-phosphate glycosidase 2.